The following is a 690-amino-acid chain: Protein arginine N-methyltransferase 7 (690 aa).

SAM-dependent MTase PRMT-type domains lie at 14–357 (QNSW…YSLW) and 366–690 (TKSV…QKKL).

Belongs to the class I-like SAM-binding methyltransferase superfamily. Protein arginine N-methyltransferase family. PRMT7 subfamily. In terms of tissue distribution, expressed at low level in ovary.

Essential arginine methyltransferase that can both catalyze the formation of omega-N monomethylarginine (MMA) and symmetrical dimethylarginine (sDMA). Specifically mediates the symmetrical dimethylation of arginine residues in the small nuclear ribonucleoproteins SmD1 and SmD3. This Drosophila melanogaster (Fruit fly) protein is Protein arginine N-methyltransferase 7 (Art7).